The sequence spans 262 residues: Acyl-[acyl-carrier-protein]--UDP-N-acetylglucosamine O-acyltransferase (262 aa).

This sequence belongs to the transferase hexapeptide repeat family. LpxA subfamily. In terms of assembly, homotrimer.

It localises to the cytoplasm. It carries out the reaction a (3R)-hydroxyacyl-[ACP] + UDP-N-acetyl-alpha-D-glucosamine = a UDP-3-O-[(3R)-3-hydroxyacyl]-N-acetyl-alpha-D-glucosamine + holo-[ACP]. The protein operates within glycolipid biosynthesis; lipid IV(A) biosynthesis; lipid IV(A) from (3R)-3-hydroxytetradecanoyl-[acyl-carrier-protein] and UDP-N-acetyl-alpha-D-glucosamine: step 1/6. In terms of biological role, involved in the biosynthesis of lipid A, a phosphorylated glycolipid that anchors the lipopolysaccharide to the outer membrane of the cell. This is Acyl-[acyl-carrier-protein]--UDP-N-acetylglucosamine O-acyltransferase from Vibrio vulnificus (strain CMCP6).